Consider the following 218-residue polypeptide: Ropporin-1-like protein (218 aa).

The 38-residue stretch at 17–54 (PALPNMLKQFTKAAIRTQPRDVLQWAADYFSALSKGQD) folds into the RIIa domain. Positions 199–218 (QSQGGMVQPSNFTSLHTAEK) are disordered.

It belongs to the ropporin family. As to quaternary structure, component of axonemal radial spoke complexes.

Its subcellular location is the cell projection. It localises to the cilium. It is found in the flagellum. Functions as part of axonemal radial spoke complexes that play an important part in the motility of sperm and cilia. Important for male fertility. Involved in fibrous sheath integrity and sperm motility, plays a role in PKA-dependent signaling processes required for spermatozoa capacitation. In Danio rerio (Zebrafish), this protein is Ropporin-1-like protein (ropn1l).